A 509-amino-acid chain; its full sequence is Maturase K (509 aa).

The protein belongs to the intron maturase 2 family. MatK subfamily.

It is found in the plastid. Its subcellular location is the chloroplast. Usually encoded in the trnK tRNA gene intron. Probably assists in splicing its own and other chloroplast group II introns. The sequence is that of Maturase K from Otacanthus azureus (Brazilian snapdragon).